The chain runs to 351 residues: MRPIPSLQNNFEYTDLTEPMILIPNVWGLTQQLGIFGVDRTTQESVTLEEITKSFGLMEDIHRGARHQVGRDYDRQMRTFAVPHFTYDDYITPRDIQGKRAYGKQELETLDQVRMRKLERLRGTHAATMEFARMHTLVTGKPYTPNNTVGGATGYDWYQEFGKTRFEVNFELDTPTTNILEKSELVYAHMQDEAYTGGVVGDVIAICSPEFFSKLISHPTVVEAYKYYASQPQILRERLRARGFDARYREFYFGNVLYIEYRGGFQGRPGGEKRRYVPAGEAVFIPGSGTEDLFKTFFAPASKFEHVNTPGEESYAFEYVDPKGEFLEINSETNFINVLMYPQLVVKGKAA.

Belongs to the lambda phage major capsid protein family. Homomultimer.

It is found in the virion. Its subcellular location is the host cytoplasm. Assembles to form an icosahedral capsid. The assembly is primed by the interaction between capsid assembly protease and portal dodecamer, and major capsid proteins assemble cooperatively to form the procapsid with the help of capsid scaffolding protein. Major capsid protein forms hexons and pentons of the icosahedron. Viral genomic DNA is packaged into the procapsid through the portal vertex. The packaging triggers a dramatic reconfiguration of the capsid shell. The sequence is that of Major capsid protein from Pseudomonas phage KPP10 (Bacteriophage KPP10).